Consider the following 416-residue polypeptide: Tyrosine-protein phosphatase non-receptor type 2 (416 aa).

Positions 5-275 constitute a Tyrosine-protein phosphatase domain; the sequence is IEREFEELDA…RFSYMAIIEG (271 aa). Phosphotyrosine is present on Y22. S52 is subject to Phosphoserine. Y68 is modified (phosphotyrosine). Residues D182, 216–222, and Q260 each bind substrate; that span reads CSAGIGR. C216 functions as the Phosphocysteine intermediate in the catalytic mechanism. Position 216 is an S-nitrosocysteine (C216). S293, S298, S304, S320, and S339 each carry phosphoserine. Residues 341 to 410 form an endoplasmic reticulum location region; the sequence is ESILRKRIRE…WTLLFQLNVL (70 aa). Positions 371–410 are may mediate interaction with STX17; it reads ERKRKRWLYWQPILTKMGFVSVILVGALVGWTLLFQLNVL.

This sequence belongs to the protein-tyrosine phosphatase family. Non-receptor class 1 subfamily. Interacts with RMDN3. Interacts with TMED9. Interacts with STX17; dephosphorylates STX17. Interacts with ITGA1 (via cytoplasmic domain); activates the phosphatase activity towards EGFR. Interacts with TRAF2; probably involved in tumor necrosis factor-mediated signaling. Interacts with MET. Interacts with FAM220A and STAT3; interaction with FAM220A promotes interaction of PTPN2 with transcriptional activator STAT3, leading to dephosphorylation of STAT3 by PTPN2 and negative regulation of STAT3 transcriptional activator activity. Specifically phosphorylated in a cell cycle-dependent manner by cyclin-dependent kinases CDK1 and CDK2. Probably activated through phosphorylation by PKR. In terms of tissue distribution, does not show tissue- or cell-type specificity although levels of transcription show variability. Macrophages showed higher levels of expression than lymphocytes.

The protein resides in the cytoplasm. The protein localises to the endoplasmic reticulum-Golgi intermediate compartment. It localises to the endoplasmic reticulum. Its subcellular location is the nucleus membrane. It is found in the nucleus. The protein resides in the cell membrane. The catalysed reaction is O-phospho-L-tyrosyl-[protein] + H2O = L-tyrosyl-[protein] + phosphate. In terms of biological role, non-receptor type tyrosine-specific phosphatase that dephosphorylates receptor protein tyrosine kinases including INSR, EGFR, CSF1R, PDGFR. Also dephosphorylates non-receptor protein tyrosine kinases like JAK1, JAK2, JAK3, Src family kinases, STAT1, STAT3 and STAT6 either in the nucleus or the cytoplasm. Negatively regulates numerous signaling pathways and biological processes like hematopoiesis, inflammatory response, cell proliferation and differentiation, and glucose homeostasis. Plays a multifaceted and important role in the development of the immune system. Functions in T-cell receptor signaling through dephosphorylation of FYN and LCK to control T-cells differentiation and activation. Dephosphorylates CSF1R, negatively regulating its downstream signaling and macrophage differentiation. Negatively regulates cytokine (IL2/interleukin-2 and interferon)-mediated signaling through dephosphorylation of the cytoplasmic kinases JAK1, JAK3 and their substrate STAT1, that propagate signaling downstream of the cytokine receptors. Also regulates the IL6/interleukin-6 and IL4/interleukin-4 cytokine signaling through dephosphorylation of STAT3 and STAT6 respectively. In addition to the immune system, it is involved in anchorage-dependent, negative regulation of EGF-stimulated cell growth. Activated by the integrin ITGA1/ITGB1, it dephosphorylates EGFR and negatively regulates EGF signaling. Dephosphorylates PDGFRB and negatively regulates platelet-derived growth factor receptor-beta signaling pathway and therefore cell proliferation. Negatively regulates tumor necrosis factor-mediated signaling downstream via MAPK through SRC dephosphorylation. May also regulate the hepatocyte growth factor receptor signaling pathway through dephosphorylation of the hepatocyte growth factor receptor MET. Also plays an important role in glucose homeostasis. For instance, negatively regulates the insulin receptor signaling pathway through the dephosphorylation of INSR and control gluconeogenesis and liver glucose production through negative regulation of the IL6 signaling pathways. May also bind DNA. This Rattus norvegicus (Rat) protein is Tyrosine-protein phosphatase non-receptor type 2 (Ptpn2).